The sequence spans 1492 residues: DNA polymerase alpha catalytic subunit (1492 aa).

3 disordered regions span residues 34-112, 162-195, and 210-234; these read DFIV…VEQS, SVTL…DVNP, and ANSY…EMAN. A compositionally biased stretch (basic and acidic residues) spans 42 to 55; the sequence is YGYRDHGGEIWDRD. The segment covering 93-105 has biased composition (polar residues); it reads NAASTNPSAQQKP. A compositionally biased stretch (basic and acidic residues) spans 166 to 178; the sequence is ESREEQERRRQSE. Polar residues-rich tracts occupy residues 184-194 and 210-224; these read ANIGQNQSDVN and ANSY…SVSK. Zn(2+) contacts are provided by Cys-1314, Cys-1317, Cys-1341, Cys-1344, Cys-1375, Cys-1380, Cys-1393, and Cys-1398. The CysA-type zinc finger occupies 1314–1344; sequence CPHCAHNYHFPGILVPSSNNTELTGLACVKC. The CysB motif signature appears at 1375–1398; the sequence is CKEPQCGMKTNQLLLNNKCIVKGC.

It belongs to the DNA polymerase type-B family.

Its subcellular location is the nucleus. It carries out the reaction DNA(n) + a 2'-deoxyribonucleoside 5'-triphosphate = DNA(n+1) + diphosphate. In terms of biological role, polymerase alpha in a complex with DNA primase is a replicative polymerase. The sequence is that of DNA polymerase alpha catalytic subunit from Sterkiella nova (Ciliate).